Here is a 569-residue protein sequence, read N- to C-terminus: Arginine--tRNA ligase (569 aa).

Residues 128–138 (ANPTGPLHVGH) carry the 'HIGH' region motif.

It belongs to the class-I aminoacyl-tRNA synthetase family. In terms of assembly, monomer.

It is found in the cytoplasm. It carries out the reaction tRNA(Arg) + L-arginine + ATP = L-arginyl-tRNA(Arg) + AMP + diphosphate. This Paracidovorax citrulli (strain AAC00-1) (Acidovorax citrulli) protein is Arginine--tRNA ligase.